The sequence spans 235 residues: MICOS complex subunit MIC25 (235 aa).

A lipid anchor (N-myristoyl glycine) is attached at glycine 2. Phosphoserine is present on residues serine 13 and serine 31. Disordered stretches follow at residues 31 to 90 (SENV…VKRY) and 106 to 132 (KRER…HEEQ). Residues 129–176 (HEEQKSVRLARELESREAELRRRDTFYKEQLERIERKNAEMYKLSSEQ) adopt a coiled-coil conformation. Positions 194 to 235 (EPVCSGLQAQILHCYRDRPHEVLLCSDLVKAYQRCVSAAHKG) constitute a CHCH domain. 2 consecutive short sequence motifs (cx9C motif) follow at residues 197–207 (CSGLQAQILHC) and 218–228 (CSDLVKAYQRC). 2 cysteine pairs are disulfide-bonded: cysteine 197–cysteine 228 and cysteine 207–cysteine 218.

This sequence belongs to the MICOS complex subunit Mic19 family. Metazoan Mic25 subfamily. As to quaternary structure, component of the mitochondrial contact site and cristae organizing system (MICOS) complex, composed of at least MICOS10/MIC10, CHCHD3/MIC19, CHCHD6/MIC25, APOOL/MIC27, IMMT/MIC60, APOO/MIC23/MIC26 and MICOS13/MIC13. This complex was also known under the names MINOS or MitOS complex. The MICOS complex associates with mitochondrial outer membrane proteins SAMM50, MTX1 and MTX2 (together described as components of the mitochondrial outer membrane sorting assembly machinery (SAM) complex) and DNAJC11, mitochondrial inner membrane protein TMEM11 and with HSPA9. The MICOS and SAM complexes together with DNAJC11 are part of a large protein complex spanning both membranes termed the mitochondrial intermembrane space bridging (MIB) complex. Interacts with DISC1. Interacts with DISC1. Interacts with IMMT/MIC60. In terms of assembly, (Microbial infection) Interacts with human cytomegalovirus protein UL37 isoform vMIA; this interaction rewires mitochondria by engaging the conserved MICOS complex.

It localises to the mitochondrion inner membrane. It is found in the mitochondrion. Its function is as follows. Component of the MICOS complex, a large protein complex of the mitochondrial inner membrane that plays crucial roles in the maintenance of crista junctions, inner membrane architecture, and formation of contact sites to the outer membrane. The chain is MICOS complex subunit MIC25 (CHCHD6) from Homo sapiens (Human).